The following is a 125-amino-acid chain: Mediator of RNA polymerase II transcription subunit 11 (125 aa).

This sequence belongs to the Mediator complex subunit 11 family. Component of the Mediator complex.

It localises to the nucleus. Its function is as follows. Component of the Mediator complex, a coactivator involved in the regulated transcription of nearly all RNA polymerase II-dependent genes. Mediator functions as a bridge to convey information from gene-specific regulatory proteins to the basal RNA polymerase II transcription machinery. Mediator is recruited to promoters by direct interactions with regulatory proteins and serves as a scaffold for the assembly of a functional pre-initiation complex with RNA polymerase II and the general transcription factors. In Candida glabrata (strain ATCC 2001 / BCRC 20586 / JCM 3761 / NBRC 0622 / NRRL Y-65 / CBS 138) (Yeast), this protein is Mediator of RNA polymerase II transcription subunit 11 (MED11).